Here is a 95-residue protein sequence, read N- to C-terminus: Large ribosomal subunit protein bL25 (95 aa).

Belongs to the bacterial ribosomal protein bL25 family. As to quaternary structure, part of the 50S ribosomal subunit; part of the 5S rRNA/L5/L18/L25 subcomplex. Contacts the 5S rRNA. Binds to the 5S rRNA independently of L5 and L18.

Its function is as follows. This is one of the proteins that binds to the 5S RNA in the ribosome where it forms part of the central protuberance. The sequence is that of Large ribosomal subunit protein bL25 from Haemophilus influenzae (strain PittGG).